The primary structure comprises 410 residues: Hemocyanin, beta-C chain unit D (410 aa).

Cu cation contacts are provided by histidine 44 and histidine 55. Cysteines 50 and 59 form a disulfide. Positions cysteine 60 to histidine 62 form a cross-link, 2'-(S-cysteinyl)-histidine (Cys-His). Residues histidine 71, histidine 175, histidine 179, and histidine 206 each contribute to the Cu cation site. An intrachain disulfide couples cysteine 165 to cysteine 232. N-linked (GlcNAc...) asparagine glycosylation occurs at asparagine 253. Cysteines 321 and 332 form a disulfide.

The protein belongs to the tyrosinase family. Hemocyanin subfamily. In terms of assembly, decamers of large identical subunits (450 kDa), each containing 8 globular oxygen-binding functional units. The cofactor is Cu(2+).

Its function is as follows. Hemocyanins are copper-containing oxygen carriers occurring freely dissolved in the hemolymph of many mollusks and arthropods. This Helix pomatia (Roman snail) protein is Hemocyanin, beta-C chain unit D.